Consider the following 118-residue polypeptide: Large ribosomal subunit protein bL20 (118 aa).

Belongs to the bacterial ribosomal protein bL20 family.

Binds directly to 23S ribosomal RNA and is necessary for the in vitro assembly process of the 50S ribosomal subunit. It is not involved in the protein synthesizing functions of that subunit. This chain is Large ribosomal subunit protein bL20, found in Photorhabdus laumondii subsp. laumondii (strain DSM 15139 / CIP 105565 / TT01) (Photorhabdus luminescens subsp. laumondii).